The primary structure comprises 509 residues: Pituitary homeobox homolog Ptx1 (509 aa).

Residues 70–98 (NGAGSAGSAESATTTSTALSSGSTGSSTV) show a composition bias toward low complexity. Disordered regions lie at residues 70-125 (NGAG…SSVS), 148-171 (QDLVGGYSQHPHHTVVPPHTPKHE), and 204-273 (LNNF…HFTS). Positions 227–242 (RSVNETTIKTENISSS) are enriched in polar residues. A compositionally biased stretch (basic and acidic residues) spans 243 to 258 (GHDEPMTTSGEEPKND). Residues 259–269 (KKNKRQRRQRT) are compositionally biased toward basic residues. The segment at residues 262-322 (KRQRRQRTHF…KNRRAKWRKR (61 aa)) is a DNA-binding region (homeobox). The OAR signature appears at 460-473 (SSIATLRLKAKQHA). The short motif at 464 to 470 (TLRLKAK) is the Nuclear localization signal element.

It belongs to the paired homeobox family. Bicoid subfamily.

The protein resides in the nucleus. Appears to control physiological cell functions rather than pattern formation during embryogenesis. This chain is Pituitary homeobox homolog Ptx1 (Ptx1), found in Drosophila melanogaster (Fruit fly).